The chain runs to 412 residues: Hyaluronidase-3 (412 aa).

Positions 1–22 are cleaved as a signal peptide; sequence MIMHLGLMMVVGLTLCLMHGQA. 5 cysteine pairs are disulfide-bonded: Cys-42–Cys-332, Cys-206–Cys-221, Cys-357–Cys-368, Cys-362–Cys-396, and Cys-398–Cys-407. Asn-69 carries an N-linked (GlcNAc...) asparagine glycan. The Proton donor role is filled by Glu-129. Asn-216 carries an N-linked (GlcNAc...) asparagine glycan. Residues 353 to 408 form the EGF-like domain; the sequence is AAMACSHQRCHGHGRCARKDPGQMEAFLHLQPDDSLGAWNSFRCHCYSGWAGPTCL.

The protein belongs to the glycosyl hydrolase 56 family. Post-translationally, N-glycosylated. In terms of tissue distribution, expressed in testis, epididymal tissue, epididymal luminal fluid (ELF), acrosome-intact (AI) sperm and caput (CAP), corpus (COR) and caudal (CAU) sperm. Higher expression in sperm than testis (at protein level). Liver, kidney, skin, brain, stomach and testis. Expressed mainly in granulosa cells of the ovaries. Expressed in small and large antral follicles. Not present in theca or stroma cells. Expressed in testis and liver. Expressed in testis and CAP, COR, and CAU epididymis tissue.

It is found in the secreted. The protein resides in the cell membrane. It localises to the cytoplasmic vesicle. The protein localises to the secretory vesicle. Its subcellular location is the acrosome. It is found in the endoplasmic reticulum. The protein resides in the early endosome. It carries out the reaction Random hydrolysis of (1-&gt;4)-linkages between N-acetyl-beta-D-glucosamine and D-glucuronate residues in hyaluronate.. In terms of biological role, facilitates sperm penetration into the layer of cumulus cells surrounding the egg by digesting hyaluronic acid. Involved in induction of the acrosome reaction in the sperm. Involved in follicular atresia, the breakdown of immature ovarian follicles that are not selected to ovulate. Induces ovarian granulosa cell apoptosis, possibly via apoptotic signaling pathway involving CASP8 and CASP3 activation, and poly(ADP-ribose) polymerase (PARP) cleavage. Has no hyaluronidase activity in embryonic fibroblasts in vitro. Has no hyaluronidase activity in granulosa cells in vitro. This Mus musculus (Mouse) protein is Hyaluronidase-3 (Hyal3).